A 256-amino-acid polypeptide reads, in one-letter code: NAD-dependent protein deacetylase (256 aa).

Positions 1–254 (MDISYHEKIS…KDILDVIKSE (254 aa)) constitute a Deacetylase sirtuin-type domain. NAD(+)-binding residues include Ala-28, Thr-32, Phe-39, Arg-40, Gln-105, Ile-107, Asp-108, and His-123. Residue Phe-39 coordinates nicotinamide. 2 residues coordinate nicotinamide: Ile-107 and Asp-108. The Proton acceptor role is filled by His-123. Zn(2+)-binding residues include Cys-131, Cys-134, Cys-156, and Cys-159. 3 residues coordinate NAD(+): Thr-197, Ser-198, and Asn-222.

Belongs to the sirtuin family. Class U subfamily. Zn(2+) serves as cofactor.

Its subcellular location is the cytoplasm. The enzyme catalyses N(6)-acetyl-L-lysyl-[protein] + NAD(+) + H2O = 2''-O-acetyl-ADP-D-ribose + nicotinamide + L-lysyl-[protein]. In terms of biological role, NAD-dependent protein deacetylase which modulates the activities of several enzymes which are inactive in their acetylated form. In Thermodesulfovibrio yellowstonii (strain ATCC 51303 / DSM 11347 / YP87), this protein is NAD-dependent protein deacetylase.